We begin with the raw amino-acid sequence, 306 residues long: Glutaminase (306 aa).

Positions 64, 115, 159, 166, 190, 242, and 260 each coordinate substrate.

It belongs to the glutaminase family. In terms of assembly, homotetramer.

The enzyme catalyses L-glutamine + H2O = L-glutamate + NH4(+). This Aliivibrio salmonicida (strain LFI1238) (Vibrio salmonicida (strain LFI1238)) protein is Glutaminase.